The sequence spans 430 residues: Tol-Pal system protein TolB (430 aa).

An N-terminal signal peptide occupies residues 1 to 21; sequence MKQALRVAFGFLILWASVLHA.

The protein belongs to the TolB family. As to quaternary structure, the Tol-Pal system is composed of five core proteins: the inner membrane proteins TolA, TolQ and TolR, the periplasmic protein TolB and the outer membrane protein Pal. They form a network linking the inner and outer membranes and the peptidoglycan layer.

It localises to the periplasm. Its function is as follows. Part of the Tol-Pal system, which plays a role in outer membrane invagination during cell division and is important for maintaining outer membrane integrity. TolB occupies a key intermediary position in the Tol-Pal system because it communicates directly with both membrane-embedded components, Pal in the outer membrane and TolA in the inner membrane. The protein is Tol-Pal system protein TolB of Shigella boydii serotype 4 (strain Sb227).